The primary structure comprises 194 residues: uncharacterized protein (194 aa).

Residues 6-66 form the HTH tetR-type domain; the sequence is SGKYEKILQA…AIAENLLTHT (61 aa). A DNA-binding region (H-T-H motif) is located at residues 29–48; that stretch reads SISDIVKKAGTAQGTFYLYF.

This is an uncharacterized protein from Bacillus subtilis (strain 168).